The sequence spans 139 residues: Transcription antitermination protein NusB (139 aa).

The protein belongs to the NusB family.

In terms of biological role, involved in transcription antitermination. Required for transcription of ribosomal RNA (rRNA) genes. Binds specifically to the boxA antiterminator sequence of the ribosomal RNA (rrn) operons. The protein is Transcription antitermination protein NusB of Baumannia cicadellinicola subsp. Homalodisca coagulata.